The following is a 152-amino-acid chain: Ribosome maturation factor RimP (152 aa).

It belongs to the RimP family.

Its subcellular location is the cytoplasm. Required for maturation of 30S ribosomal subunits. This is Ribosome maturation factor RimP from Ectopseudomonas mendocina (strain ymp) (Pseudomonas mendocina).